Consider the following 60-residue polypeptide: Homeobox protein engrailed-like A (60 aa).

The segment at residues 1–41 (ADQLARLRAEFQANRYLTEERRQNLARELSLNEAQIKIWFQ) is a DNA-binding region (homeobox).

This sequence belongs to the engrailed homeobox family.

Its subcellular location is the nucleus. This is Homeobox protein engrailed-like A from Myxine glutinosa (Atlantic hagfish).